Here is a 96-residue protein sequence, read N- to C-terminus: Putative pterin-4-alpha-carbinolamine dehydratase (96 aa).

This sequence belongs to the pterin-4-alpha-carbinolamine dehydratase family.

It catalyses the reaction (4aS,6R)-4a-hydroxy-L-erythro-5,6,7,8-tetrahydrobiopterin = (6R)-L-erythro-6,7-dihydrobiopterin + H2O. The polypeptide is Putative pterin-4-alpha-carbinolamine dehydratase (Prochlorococcus marinus subsp. pastoris (strain CCMP1986 / NIES-2087 / MED4)).